The primary structure comprises 467 residues: Glutamate--tRNA ligase (467 aa).

A 'HIGH' region motif is present at residues 9 to 19 (PSPTGYLHIGG). Residues 237-241 (KLSKR) carry the 'KMSKS' region motif. Lys-240 is a binding site for ATP.

Belongs to the class-I aminoacyl-tRNA synthetase family. Glutamate--tRNA ligase type 1 subfamily. In terms of assembly, monomer.

It localises to the cytoplasm. The catalysed reaction is tRNA(Glu) + L-glutamate + ATP = L-glutamyl-tRNA(Glu) + AMP + diphosphate. In terms of biological role, catalyzes the attachment of glutamate to tRNA(Glu) in a two-step reaction: glutamate is first activated by ATP to form Glu-AMP and then transferred to the acceptor end of tRNA(Glu). This chain is Glutamate--tRNA ligase, found in Stenotrophomonas maltophilia (strain R551-3).